The following is a 132-amino-acid chain: Small ribosomal subunit protein uS8 (132 aa).

It belongs to the universal ribosomal protein uS8 family. Part of the 30S ribosomal subunit. Contacts proteins S5 and S12.

Functionally, one of the primary rRNA binding proteins, it binds directly to 16S rRNA central domain where it helps coordinate assembly of the platform of the 30S subunit. This is Small ribosomal subunit protein uS8 from Latilactobacillus sakei subsp. sakei (strain 23K) (Lactobacillus sakei subsp. sakei).